Consider the following 314-residue polypeptide: DNA topoisomerase I (314 aa).

The Topo IB-type catalytic domain occupies 77 to 314 (IQNRNAKRDR…VDHVKSSTDG (238 aa)). Catalysis depends on Tyr-274, which acts as the O-(3'-phospho-DNA)-tyrosine intermediate.

This sequence belongs to the type IB topoisomerase family.

It is found in the virion. It catalyses the reaction ATP-independent breakage of single-stranded DNA, followed by passage and rejoining.. Releases the supercoiling and torsional tension of DNA introduced during the DNA replication and transcription by transiently cleaving and rejoining one strand of the DNA duplex. Introduces a single-strand break via transesterification at the specific target site 5'-[CT]CCTTp site in duplex DNA. The scissile phosphodiester is attacked by the catalytic tyrosine of the enzyme, resulting in the formation of a DNA-(3'-phosphotyrosyl)-enzyme intermediate and the expulsion of a 5'-OH DNA strand. The free DNA strand then undergoes passage around the unbroken strand thus removing DNA supercoils. Finally, in the religation step, the DNA 5'-OH attacks the covalent intermediate to expel the active-site tyrosine and restore the DNA phosphodiester backbone. The chain is DNA topoisomerase I (OPG111) from Cynomys gunnisoni (Gunnison's prairie dog).